The sequence spans 330 residues: Ribose-phosphate pyrophosphokinase (330 aa).

ATP-binding positions include 40 to 42 (DGE) and 99 to 100 (RQ). The Mg(2+) site is built by His133 and Asp174. Residue Lys197 is part of the active site. D-ribose 5-phosphate contacts are provided by residues Arg199, Asp223, and 227-231 (DTGGT).

This sequence belongs to the ribose-phosphate pyrophosphokinase family. Class I subfamily. In terms of assembly, homohexamer. Mg(2+) is required as a cofactor.

It localises to the cytoplasm. It catalyses the reaction D-ribose 5-phosphate + ATP = 5-phospho-alpha-D-ribose 1-diphosphate + AMP + H(+). The protein operates within metabolic intermediate biosynthesis; 5-phospho-alpha-D-ribose 1-diphosphate biosynthesis; 5-phospho-alpha-D-ribose 1-diphosphate from D-ribose 5-phosphate (route I): step 1/1. In terms of biological role, involved in the biosynthesis of the central metabolite phospho-alpha-D-ribosyl-1-pyrophosphate (PRPP) via the transfer of pyrophosphoryl group from ATP to 1-hydroxyl of ribose-5-phosphate (Rib-5-P). This chain is Ribose-phosphate pyrophosphokinase, found in Ureaplasma parvum serovar 3 (strain ATCC 700970).